Here is a 302-residue protein sequence, read N- to C-terminus: Intermediate capsid protein VP8 (302 aa).

The protein resides in the virion. In terms of biological role, self assembles to form an icosahedral capsid with a T=13 symmetry, which consists of 230 trimers, with channels at each of its five-fold vertices. In Banna virus (BAV), this protein is Intermediate capsid protein VP8 (Segment-8).